We begin with the raw amino-acid sequence, 260 residues long: 5'-nucleotidase SurE (260 aa).

A divalent metal cation is bound by residues aspartate 8, aspartate 9, serine 39, and asparagine 96.

This sequence belongs to the SurE nucleotidase family. A divalent metal cation is required as a cofactor.

The protein resides in the cytoplasm. It catalyses the reaction a ribonucleoside 5'-phosphate + H2O = a ribonucleoside + phosphate. Its function is as follows. Nucleotidase that shows phosphatase activity on nucleoside 5'-monophosphates. This Moorella thermoacetica (strain ATCC 39073 / JCM 9320) protein is 5'-nucleotidase SurE.